A 310-amino-acid chain; its full sequence is GMP synthase [glutamine-hydrolyzing] subunit B (310 aa).

A GMPS ATP-PPase domain is found at 1 to 187; that stretch reads MSFSDYISRI…LGLPTDIQPF (187 aa). 27-33 serves as a coordination point for ATP; the sequence is SGGQDSS.

As to quaternary structure, heterodimer composed of a glutamine amidotransferase subunit (A) and a GMP-binding subunit (B).

It catalyses the reaction XMP + L-glutamine + ATP + H2O = GMP + L-glutamate + AMP + diphosphate + 2 H(+). Its pathway is purine metabolism; GMP biosynthesis; GMP from XMP (L-Gln route): step 1/1. Its function is as follows. Catalyzes the synthesis of GMP from XMP. In Thermoplasma volcanium (strain ATCC 51530 / DSM 4299 / JCM 9571 / NBRC 15438 / GSS1), this protein is GMP synthase [glutamine-hydrolyzing] subunit B (guaAB).